A 199-amino-acid polypeptide reads, in one-letter code: Recombination protein RecR (199 aa).

Residues 56 to 71 form a C4-type zinc finger; it reads CRSCFNVAQSELCRIC. The 96-residue stretch at 79–174 folds into the Toprim domain; the sequence is SSICVVEEPK…KVTRLASGLP (96 aa).

It belongs to the RecR family.

Functionally, may play a role in DNA repair. It seems to be involved in an RecBC-independent recombinational process of DNA repair. It may act with RecF and RecO. In Frankia casuarinae (strain DSM 45818 / CECT 9043 / HFP020203 / CcI3), this protein is Recombination protein RecR.